Consider the following 58-residue polypeptide: SPbeta prophage-derived uncharacterized protein YotN (58 aa).

The sequence is that of SPbeta prophage-derived uncharacterized protein YotN (yotN) from Bacillus subtilis (strain 168).